A 208-amino-acid polypeptide reads, in one-letter code: Probable GTP-binding protein EngB (208 aa).

One can recognise an EngB-type G domain in the interval 23-205; the sequence is LTSEMVVLGR…RQTLLKHLLT (183 aa). Residues 31 to 38, 57 to 61, 84 to 87, 154 to 157, and 182 to 184 contribute to the GTP site; these read GRSNVGKS, GKTRL, DLPG, TKFD, and FNA. 2 residues coordinate Mg(2+): serine 38 and threonine 59.

Belongs to the TRAFAC class TrmE-Era-EngA-EngB-Septin-like GTPase superfamily. EngB GTPase family. It depends on Mg(2+) as a cofactor.

Its function is as follows. Necessary for normal cell division and for the maintenance of normal septation. In Helicobacter pylori (strain ATCC 700392 / 26695) (Campylobacter pylori), this protein is Probable GTP-binding protein EngB.